The following is a 211-amino-acid chain: Peroxiredoxin (211 aa).

Residues 2 to 156 (PLIGDKFPEM…IVRMIRAFRV (155 aa)) form the Thioredoxin domain. Residue Cys-44 is the Cysteine sulfenic acid (-SOH) intermediate of the active site. Residue Arg-119 coordinates substrate. The cysteines at positions 198 and 204 are disulfide-linked.

This sequence belongs to the peroxiredoxin family. Prx6 subfamily. Homodecamer. Pentamer of dimers that assemble into a ring structure.

The protein localises to the cytoplasm. It catalyses the reaction a hydroperoxide + [thioredoxin]-dithiol = an alcohol + [thioredoxin]-disulfide + H2O. Functionally, thiol-specific peroxidase that catalyzes the reduction of hydrogen peroxide and organic hydroperoxides to water and alcohols, respectively. Plays a role in cell protection against oxidative stress by detoxifying peroxides. This Methanothermobacter marburgensis (strain ATCC BAA-927 / DSM 2133 / JCM 14651 / NBRC 100331 / OCM 82 / Marburg) (Methanobacterium thermoautotrophicum) protein is Peroxiredoxin.